Consider the following 203-residue polypeptide: Bone marrow stromal antigen 2 (203 aa).

Residues 1 to 26 (MAPTFYHYHPLPMDQKEPGCGIRWRC) are Cytoplasmic-facing. The chain crosses the membrane as a helical; Signal-anchor for type II membrane protein span at residues 27 to 47 (LAAASVLILVALVIPLIIFAV). The Extracellular segment spans residues 48 to 183 (KANSEACRDG…EASITSKQNS (136 aa)). Residues N66 and N93 are each glycosylated (N-linked (GlcNAc...) asparagine). Residues 66 to 178 (NTTRLLQRQL…LRTAEEASIT (113 aa)) are a coiled coil. The GPI-anchor amidated serine moiety is linked to residue S183. The propeptide at 184 to 203 (AGSMAVSSLLVLAVPLFLLF) is removed in mature form.

As to quaternary structure, parallel homodimer; disulfide-linked. May form homotetramers under reducing conditions. Isoform 1 and isoform 2 form homodimers and also heterodimers with each other. Dimerization is essential for its antiviral activity. Interacts (via cytoplasmic domain) with ARHGAP44. Interacts with MMP14 (via C-terminal cytoplasmic tail). Interacts with LILRA4/ILT7. Interacts with RNF115. The GPI anchor is essential for its antiviral activity.

It localises to the golgi apparatus. The protein localises to the trans-Golgi network. The protein resides in the cell membrane. It is found in the late endosome. Its subcellular location is the membrane raft. It localises to the cytoplasm. The protein localises to the apical cell membrane. Functionally, IFN-induced antiviral host restriction factor which efficiently blocks the release of diverse mammalian enveloped viruses by directly tethering nascent virions to the membranes of infected cells. Acts as a direct physical tether, holding virions to the cell membrane and linking virions to each other. The tethered virions can be internalized by endocytosis and subsequently degraded or they can remain on the cell surface. In either case, their spread as cell-free virions is restricted. Its target viruses belong to diverse families, including retroviridae: human immunodeficiency virus type 1 (HIV-1), mouse mammary tumor virus (MMTV) and murine leukemia virus (MLV), filoviridae: ebola virus (EBOV), arenaviridae: lassa virus (LASV), and rhabdoviridae: vesicular stomatitis virus (VSV). Can inhibit cell surface proteolytic activity of MMP14 causing decreased activation of MMP15 which results in inhibition of cell growth and migration. Can stimulate signaling by LILRA4/ILT7 and consequently provide negative feedback to the production of IFN by plasmacytoid dendritic cells in response to viral infection. Plays a role in the organization of the subapical actin cytoskeleton in polarized epithelial cells. This is Bone marrow stromal antigen 2 (Bst2) from Cricetulus griseus (Chinese hamster).